The sequence spans 742 residues: Phosphoribosylformylglycinamidine synthase subunit PurL (742 aa).

His53 is a catalytic residue. 2 residues coordinate ATP: Tyr56 and Lys95. Glu97 contributes to the Mg(2+) binding site. Residues 98 to 101 and Arg120 each bind substrate; that span reads SHNH. The active-site Proton acceptor is the His99. Asp121 lines the Mg(2+) pocket. Gln245 contacts substrate. Asp275 provides a ligand contact to Mg(2+). Position 319–321 (319–321) interacts with substrate; it reads ESQ. ATP is bound by residues Asp502 and Gly539. Asn540 lines the Mg(2+) pocket. Ser542 contributes to the substrate binding site.

The protein belongs to the FGAMS family. In terms of assembly, monomer. Part of the FGAM synthase complex composed of 1 PurL, 1 PurQ and 2 PurS subunits.

The protein localises to the cytoplasm. The enzyme catalyses N(2)-formyl-N(1)-(5-phospho-beta-D-ribosyl)glycinamide + L-glutamine + ATP + H2O = 2-formamido-N(1)-(5-O-phospho-beta-D-ribosyl)acetamidine + L-glutamate + ADP + phosphate + H(+). It functions in the pathway purine metabolism; IMP biosynthesis via de novo pathway; 5-amino-1-(5-phospho-D-ribosyl)imidazole from N(2)-formyl-N(1)-(5-phospho-D-ribosyl)glycinamide: step 1/2. In terms of biological role, part of the phosphoribosylformylglycinamidine synthase complex involved in the purines biosynthetic pathway. Catalyzes the ATP-dependent conversion of formylglycinamide ribonucleotide (FGAR) and glutamine to yield formylglycinamidine ribonucleotide (FGAM) and glutamate. The FGAM synthase complex is composed of three subunits. PurQ produces an ammonia molecule by converting glutamine to glutamate. PurL transfers the ammonia molecule to FGAR to form FGAM in an ATP-dependent manner. PurS interacts with PurQ and PurL and is thought to assist in the transfer of the ammonia molecule from PurQ to PurL. This is Phosphoribosylformylglycinamidine synthase subunit PurL from Lactobacillus acidophilus (strain ATCC 700396 / NCK56 / N2 / NCFM).